A 329-amino-acid chain; its full sequence is Fructose-1,6-bisphosphatase class 1 (329 aa).

4 residues coordinate Mg(2+): E84, D103, L105, and D106. Residues 106 to 109 (DGSS), N196, and K262 each bind substrate. Residue E268 participates in Mg(2+) binding.

Belongs to the FBPase class 1 family. As to quaternary structure, homotetramer. Mg(2+) is required as a cofactor.

The protein resides in the cytoplasm. It catalyses the reaction beta-D-fructose 1,6-bisphosphate + H2O = beta-D-fructose 6-phosphate + phosphate. It functions in the pathway carbohydrate biosynthesis; gluconeogenesis. This Shewanella loihica (strain ATCC BAA-1088 / PV-4) protein is Fructose-1,6-bisphosphatase class 1.